We begin with the raw amino-acid sequence, 441 residues long: RUN domain-containing protein 3A (441 aa).

Residues 1–293 (MEASFVQTTM…LQLQLEEAAA (293 aa)) are interaction with RAP2A. The RUN domain maps to 52 to 184 (DDSSEEFVNF…IDFSFCLKGE (133 aa)). Thr-210 bears the Phosphothreonine mark. The disordered stretch occupies residues 211–234 (DEEERHSAESSTSEDNSPEHPYLP). Ser-227 is subject to Phosphoserine. The stretch at 262-317 (YLEELVRLRESQLKDLEAENRRLQLQLEEAAAQNQREKRELEGVILELQEQLTGLI) forms a coiled coil. Positions 367–379 (PLSAEASLSSDSQ) are enriched in polar residues. A disordered region spans residues 367-399 (PLSAEASLSSDSQRLGEGKRDEEPWGPIGKDPT). Over residues 380-389 (RLGEGKRDEE) the composition is skewed to basic and acidic residues. Phosphoserine is present on residues Ser-411 and Ser-414.

It belongs to the RUNDC3 family. As to quaternary structure, interacts with the GTP-bound form of RAP2A.

May act as an effector of RAP2A in neuronal cells. The chain is RUN domain-containing protein 3A (RUNDC3A) from Bos taurus (Bovine).